Consider the following 510-residue polypeptide: D-alanine--D-alanyl carrier protein ligase (510 aa).

157–158 (TS) provides a ligand contact to ATP. Aspartate 202 lines the D-alanine pocket. ATP is bound at residue 297–302 (NTYGPT). Valine 306 is a binding site for D-alanine. ATP is bound by residues aspartate 389 and lysine 498. Lysine 498 is a binding site for D-alanine.

The protein belongs to the ATP-dependent AMP-binding enzyme family. DltA subfamily.

The protein resides in the cytoplasm. It carries out the reaction holo-[D-alanyl-carrier protein] + D-alanine + ATP = D-alanyl-[D-alanyl-carrier protein] + AMP + diphosphate. It functions in the pathway cell wall biogenesis; lipoteichoic acid biosynthesis. Catalyzes the first step in the D-alanylation of lipoteichoic acid (LTA), the activation of D-alanine and its transfer onto the D-alanyl carrier protein (Dcp) DltC. In an ATP-dependent two-step reaction, forms a high energy D-alanyl-AMP intermediate, followed by transfer of the D-alanyl residue as a thiol ester to the phosphopantheinyl prosthetic group of the Dcp. D-alanylation of LTA plays an important role in modulating the properties of the cell wall in Gram-positive bacteria, influencing the net charge of the cell wall. This is D-alanine--D-alanyl carrier protein ligase from Listeria welshimeri serovar 6b (strain ATCC 35897 / DSM 20650 / CCUG 15529 / CIP 8149 / NCTC 11857 / SLCC 5334 / V8).